Consider the following 304-residue polypeptide: Probable actin-related protein 2/3 complex subunit 2 (304 aa).

The protein belongs to the ARPC2 family. Component of the Arp2/3 complex.

It is found in the cytoplasm. The protein resides in the cytoskeleton. Its function is as follows. Functions as actin-binding component of the Arp2/3 complex which is involved in regulation of actin polymerization and together with an activating nucleation-promoting factor (NPF) mediates the formation of branched actin networks. Seems to contact the mother actin filament. This chain is Probable actin-related protein 2/3 complex subunit 2 (Arc-p34), found in Anopheles gambiae (African malaria mosquito).